We begin with the raw amino-acid sequence, 362 residues long: Homeobox protein Nkx-2.3 (362 aa).

2 disordered regions span residues 126-149 (EAAG…RKPR) and 203-222 (QRQD…PPRR). Over residues 132–141 (KTSEDGERPK) the composition is skewed to basic and acidic residues. Positions 145-204 (RRKPRVLFSQAQVFELERRFKQQRYLSAPEREHLASSLKLTSTQVKIWFQNRRYKCKRQR) form a DNA-binding region, homeobox.

This sequence belongs to the NK-2 homeobox family. As to expression, expressed in spleen and intestine. Also expressed in salivary gland and tongue.

Its subcellular location is the nucleus. Its function is as follows. Transcriptional regulator essential for normal development and functions of the small intestine and spleen. Activates directly MADCAM1 expression. Required for homing of lymphocytes in spleen and mucosa-associated lymphoid tissue. May have a role during pharyngeal organogenesis. The polypeptide is Homeobox protein Nkx-2.3 (Nkx2-3) (Mus musculus (Mouse)).